Consider the following 179-residue polypeptide: Large ribosomal subunit protein uL5 (179 aa).

Belongs to the universal ribosomal protein uL5 family. Part of the 50S ribosomal subunit; part of the 5S rRNA/L5/L18/L25 subcomplex. Contacts the 5S rRNA and the P site tRNA. Forms a bridge to the 30S subunit in the 70S ribosome.

Functionally, this is one of the proteins that bind and probably mediate the attachment of the 5S RNA into the large ribosomal subunit, where it forms part of the central protuberance. In the 70S ribosome it contacts protein S13 of the 30S subunit (bridge B1b), connecting the 2 subunits; this bridge is implicated in subunit movement. Contacts the P site tRNA; the 5S rRNA and some of its associated proteins might help stabilize positioning of ribosome-bound tRNAs. This is Large ribosomal subunit protein uL5 from Maridesulfovibrio salexigens (strain ATCC 14822 / DSM 2638 / NCIMB 8403 / VKM B-1763) (Desulfovibrio salexigens).